A 352-amino-acid polypeptide reads, in one-letter code: Photosystem II D2 protein (352 aa).

Thr2 bears the N-acetylthreonine mark. Thr2 is subject to Phosphothreonine. The helical transmembrane segment at 40 to 60 (CAYFAVGGWLTGTTFVTSWYT) threads the bilayer. Position 117 (His117) interacts with chlorophyll a. The helical transmembrane segment at 124–140 (GFMLRQFEIARAIGLRP) threads the bilayer. Pheophytin a is bound by residues Gln129 and Asn142. Residues 152–165 (VFVSVFLIYPLGQS) traverse the membrane as a helical segment. His197 is a binding site for chlorophyll a. A helical membrane pass occupies residues 207-227 (AALLCAIHGATVENTLFEDGD). A plastoquinone contacts are provided by His214 and Phe261. Residue His214 participates in Fe cation binding. Fe cation is bound at residue His268. A helical membrane pass occupies residues 278-294 (GLWMSAIGVVGLALNLR).

Belongs to the reaction center PufL/M/PsbA/D family. In terms of assembly, PSII is composed of 1 copy each of membrane proteins PsbA, PsbB, PsbC, PsbD, PsbE, PsbF, PsbH, PsbI, PsbJ, PsbK, PsbL, PsbM, PsbT, PsbX, PsbY, PsbZ, Psb30/Ycf12, at least 3 peripheral proteins of the oxygen-evolving complex and a large number of cofactors. It forms dimeric complexes. The D1/D2 heterodimer binds P680, chlorophylls that are the primary electron donor of PSII, and subsequent electron acceptors. It shares a non-heme iron and each subunit binds pheophytin, quinone, additional chlorophylls, carotenoids and lipids. There is also a Cl(-1) ion associated with D1 and D2, which is required for oxygen evolution. The PSII complex binds additional chlorophylls, carotenoids and specific lipids. serves as cofactor.

It is found in the plastid. Its subcellular location is the chloroplast thylakoid membrane. It catalyses the reaction 2 a plastoquinone + 4 hnu + 2 H2O = 2 a plastoquinol + O2. Functionally, photosystem II (PSII) is a light-driven water:plastoquinone oxidoreductase that uses light energy to abstract electrons from H(2)O, generating O(2) and a proton gradient subsequently used for ATP formation. It consists of a core antenna complex that captures photons, and an electron transfer chain that converts photonic excitation into a charge separation. The D1/D2 (PsbA/PsbD) reaction center heterodimer binds P680, the primary electron donor of PSII as well as several subsequent electron acceptors. D2 is needed for assembly of a stable PSII complex. The protein is Photosystem II D2 protein of Nephroselmis olivacea (Green alga).